Here is a 465-residue protein sequence, read N- to C-terminus: Gamma-aminobutyric acid receptor subunit rho-2 (465 aa).

The signal sequence occupies residues 1-20 (MPYLMRLALVLFCLMALVES). At 21 to 260 (RKPRRKRWTG…LYINFTLRRH (240 aa)) the chain is on the extracellular side. R105 is a binding site for 4-aminobutanoate. An N-linked (GlcNAc...) asparagine glycan is attached at N120. S169 contacts 4-aminobutanoate. A disulfide bridge connects residues C178 and C192. E197 serves as a coordination point for 4-aminobutanoate. N-linked (GlcNAc...) asparagine glycosylation is present at N254. A helical membrane pass occupies residues 261 to 281 (IFFFLLQTYFPATLMVMLSWV). Residues 282 to 293 (SFWIDHRAVPAR) lie on the Cytoplasmic side of the membrane. Residues 294-314 (VSLGIMTVLTMSTIITGVNAS) traverse the membrane as a helical segment. Over 315–325 (MPRVSYIRAVD) the chain is Extracellular. A helical transmembrane segment spans residues 326 to 346 (IYLWVSFVFVFLSVLEYAAVN). Topologically, residues 347–443 (YLTTLQEQKE…IFQNTHAIDK (97 aa)) are cytoplasmic. Residues 444-464 (YSRLIFPAFYIVFNLIYWSVF) form a helical membrane-spanning segment. A topological domain (extracellular) is located at residue S465.

This sequence belongs to the ligand-gated ion channel (TC 1.A.9) family. Gamma-aminobutyric acid receptor (TC 1.A.9.5) subfamily. GABRR2 sub-subfamily. Three rho subunits (rho-1/GBRR1, rho-2/GBRR2 and rho-3/GBRR3) coassemble either to form functional homopentamers or heteropentamers. Rho-2 is unable to form a functional homopentamer. Interacts with SQSTM1. Expressed in the cerebellum.

It is found in the postsynaptic cell membrane. It localises to the cell membrane. The enzyme catalyses chloride(in) = chloride(out). Rho subunit of the pentameric ligand-gated chloride channels responsible for mediating the effects of gamma-aminobutyric acid (GABA), the major inhibitory neurotransmitter in the brain. Rho-containing GABA-gated chloride channels are a subclass of GABA(A) receptors (GABAARs) entirely composed of rho subunits, where GABA molecules bind at the rho intersubunit interfaces. When activated by GABA, rho-GABAARs selectively allow the flow of chloride anions across the cell membrane down their electrochemical gradient. Rho-2 GABAARs may contribute to the regulation of glial development in the cerebellum by controlling extrasynaptic transmission. Rho-2 GABAARs are also involved in neuronal tonic (extrasynaptic) and phasic (synaptic) transmission in the Purkinje neurons of the cerebellum. Rho-2 GABAARs expressed in retina may play a role in retinal neurotransmission. This is Gamma-aminobutyric acid receptor subunit rho-2 from Mus musculus (Mouse).